A 549-amino-acid polypeptide reads, in one-letter code: Chaperonin GroEL (549 aa).

ATP contacts are provided by residues 29-32, K50, 86-90, G414, 477-479, and D493; these read TLGP, DGTTT, and NAL.

Belongs to the chaperonin (HSP60) family. As to quaternary structure, forms a cylinder of 14 subunits composed of two heptameric rings stacked back-to-back. Interacts with the co-chaperonin GroES.

It localises to the cytoplasm. It catalyses the reaction ATP + H2O + a folded polypeptide = ADP + phosphate + an unfolded polypeptide.. Its function is as follows. Together with its co-chaperonin GroES, plays an essential role in assisting protein folding. The GroEL-GroES system forms a nano-cage that allows encapsulation of the non-native substrate proteins and provides a physical environment optimized to promote and accelerate protein folding. This Leptospira biflexa serovar Patoc (strain Patoc 1 / Ames) protein is Chaperonin GroEL.